A 603-amino-acid chain; its full sequence is Insulin-like growth factor-binding protein complex acid labile subunit (603 aa).

The first 23 residues, 1–23 (MALRTGGPALVVLLAFWVALGPC), serve as a signal peptide directing secretion. The LRRNT domain occupies 32–74 (ASADAEGPQCPVACTCSHDDYTDELSVFCSSKNLTHLPDDIPV). 2 disulfide bridges follow: Cys-41-Cys-47 and Cys-45-Cys-60. N-linked (GlcNAc...) asparagine glycosylation is found at Asn-64, Asn-85, and Asn-96. 19 LRR repeats span residues 75–96 (STRA…AFQN), 99–120 (SLDF…ALLG), 123–144 (NLYY…LFTH), 147–168 (SLAS…LFQG), 171–192 (HLWD…VFQG), 195–216 (NLHE…LFCG), 219–240 (ELRE…VFVH), 243–264 (RLQK…AFLG), 267–288 (ALRW…TFPG), 291–312 (GLHV…TFKD), 315–336 (FLEE…TFEG), 339–360 (QLEV…AFSG), 363–384 (NVAV…VFQG), 387–408 (KLHS…TFAG), 411–432 (GLRR…SLAG), 435–456 (ELLE…LFQG), 459–480 (HLEY…VLGP), 483–504 (RAFW…LFSS), and 507–528 (RVRY…PGLE). The N-linked (GlcNAc...) asparagine glycan is linked to Asn-368. An N-linked (GlcNAc...) asparagine glycan is attached at Asn-515. Residues 535–603 (NPWDCSCPLK…DVSETHFVHC (69 aa)) form the LRRCT domain. 3 cysteine pairs are disulfide-bonded: Cys-539/Cys-581, Cys-541/Cys-603, and Cys-565/Cys-570. N-linked (GlcNAc...) asparagine glycosylation is found at Asn-578 and Asn-586.

In terms of assembly, forms a ternary complex with IGF1 and IGFBP3. As to expression, brain, kidney, lung, heart, spleen, muscle and liver.

It is found in the secreted. Its subcellular location is the extracellular space. Its function is as follows. May have an important role in regulating the access of circulating IGFs to the tissues. The polypeptide is Insulin-like growth factor-binding protein complex acid labile subunit (Igfals) (Rattus norvegicus (Rat)).